Consider the following 348-residue polypeptide: Pheromone P-factor receptor (348 aa).

7 helical membrane passes run 46-69 (LLTG…VCLL), 79-103 (VFVF…TICS), 125-141 (VFNI…IFTA), 162-180 (IMTV…FWIT), 207-225 (YFIA…SGVF), 249-267 (CILV…FTII), and 283-301 (CLLI…STAL).

It belongs to the G-protein coupled receptor 4 family.

It is found in the membrane. Receptor for the peptide pheromone P-factor, a mating factor of S.pombe. Pheromone signaling is essential for initiation of meiosis in S.pombe; P-factor signaling alone may be sufficient. This is Pheromone P-factor receptor (mam2) from Schizosaccharomyces pombe (strain 972 / ATCC 24843) (Fission yeast).